Here is a 925-residue protein sequence, read N- to C-terminus: Periplasmic nitrate reductase (925 aa).

Residues 1–30 (MDRREFIKSSAAAAACSAAGIAVPSSLSAA) constitute a signal peptide (tat-type signal). The 4Fe-4S Mo/W bis-MGD-type domain maps to 36-92 (WRWDKSACRFCGTGCGIMVATKNGKIVAVKGDPLAPVNRGLNCIKGYFNAKIMYGED). [4Fe-4S] cluster is bound by residues cysteine 43, cysteine 46, cysteine 50, and cysteine 78. Residues lysine 80, glutamine 148, asparagine 173, cysteine 177, 210–217 (WGANMAEM), methionine 418, glutamine 422, asparagine 528, 553–554 (SD), lysine 576, aspartate 603, and 815–824 (TGRVLEHWHS) contribute to the Mo-bis(molybdopterin guanine dinucleotide) site. Tryptophan 891 provides a ligand contact to substrate. Mo-bis(molybdopterin guanine dinucleotide)-binding residues include asparagine 899 and lysine 916.

It belongs to the prokaryotic molybdopterin-containing oxidoreductase family. NasA/NapA/NarB subfamily. As to quaternary structure, component of the periplasmic nitrate reductase NapAB complex composed of NapA and NapB. Requires [4Fe-4S] cluster as cofactor. It depends on Mo-bis(molybdopterin guanine dinucleotide) as a cofactor. In terms of processing, predicted to be exported by the Tat system. The position of the signal peptide cleavage has not been experimentally proven.

Its subcellular location is the periplasm. The catalysed reaction is 2 Fe(II)-[cytochrome] + nitrate + 2 H(+) = 2 Fe(III)-[cytochrome] + nitrite + H2O. In terms of biological role, catalytic subunit of the periplasmic nitrate reductase complex NapAB. Receives electrons from NapB and catalyzes the reduction of nitrate to nitrite. The polypeptide is Periplasmic nitrate reductase (Campylobacter fetus subsp. fetus (strain 82-40)).